Consider the following 170-residue polypeptide: Tubulin polymerization-promoting protein family member 2 (170 aa).

A disordered region spans residues 127 to 147 (TGTHKERFDESGKGKGIAGRE). Residues 129-139 (THKERFDESGK) show a composition bias toward basic and acidic residues.

The protein belongs to the TPPP family.

The protein resides in the cytoplasm. Its subcellular location is the cytosol. It localises to the cell projection. It is found in the cilium. The protein localises to the flagellum. Functionally, probable regulator of microtubule dynamics required for sperm motility. In contrast to other members of the family, has no microtubule bundling activity. The polypeptide is Tubulin polymerization-promoting protein family member 2 (TPPP2) (Macaca fascicularis (Crab-eating macaque)).